Here is a 295-residue protein sequence, read N- to C-terminus: UDP-3-O-acyl-N-acetylglucosamine deacetylase (295 aa).

Positions 75, 232, and 236 each coordinate Zn(2+). His-259 (proton donor) is an active-site residue.

This sequence belongs to the LpxC family. Requires Zn(2+) as cofactor.

The enzyme catalyses a UDP-3-O-[(3R)-3-hydroxyacyl]-N-acetyl-alpha-D-glucosamine + H2O = a UDP-3-O-[(3R)-3-hydroxyacyl]-alpha-D-glucosamine + acetate. It participates in glycolipid biosynthesis; lipid IV(A) biosynthesis; lipid IV(A) from (3R)-3-hydroxytetradecanoyl-[acyl-carrier-protein] and UDP-N-acetyl-alpha-D-glucosamine: step 2/6. Catalyzes the hydrolysis of UDP-3-O-myristoyl-N-acetylglucosamine to form UDP-3-O-myristoylglucosamine and acetate, the committed step in lipid A biosynthesis. This is UDP-3-O-acyl-N-acetylglucosamine deacetylase from Helicobacter pylori (strain ATCC 700392 / 26695) (Campylobacter pylori).